A 592-amino-acid chain; its full sequence is Transducer of Cdc42-dependent actin assembly protein 1 homolog (592 aa).

The 265-residue stretch at 3–267 folds into the F-BAR domain; that stretch reads DSCSWDQLWD…DIGLIDPSRD (265 aa). Disordered stretches follow at residues 343–366 and 447–519; these read FGGG…QQRA and SATS…DELY. The REM-1 domain occupies 359–436; it reads TLPPQQRARK…IQKFKILLDD (78 aa). Positions 363–441 form a coiled coil; that stretch reads QQRARKIAGK…ILLDDVNAQL (79 aa). A compositionally biased stretch (polar residues) spans 447-457; that stretch reads SATSVGGSDTP. Positions 459–474 are enriched in low complexity; sequence SIRSVSSASSGVTSRV. Residues 495 to 510 show a composition bias toward polar residues; it reads FSGSNGGSDTDPTING. In terms of domain architecture, SH3 spans 527 to 589; sequence PVLGEAIAQF…PSSYLKVTWF (63 aa).

Belongs to the FNBP1 family. As to quaternary structure, interacts (via SH3 domain) with wsp-1. Interacts with cdc-42 and (via SH3 domain) with wve-1. As to expression, expressed in the germline and specifically in the gonads.

Its subcellular location is the cell junction. It is found in the apical cell membrane. The protein localises to the basolateral cell membrane. The protein resides in the cytoplasmic vesicle. It localises to the cytoplasm. Its subcellular location is the perinuclear region. It is found in the recycling endosome. Its function is as follows. Plays a role in protein trafficking, actin organization and embryonic morphogenesis. Potentially acts as a cdc-42 effector. May play a role in hypodermal P-cell nuclear positioning. Together with toca-2, is required for protein trafficking regulating yolk protein clathrin-mediated endocytosis by oocytes during oogenesis and retrograde recycling and the sorting of recycling endosome cargo proteins such as mig-14. Also, together with toca-2, controls the distribution of actin at cell junctions. This Caenorhabditis elegans protein is Transducer of Cdc42-dependent actin assembly protein 1 homolog.